Here is an 838-residue protein sequence, read N- to C-terminus: Multiphosphoryl transfer protein (838 aa).

Residues 7–147 enclose the PTS EIIA type-2 domain; the sequence is APVTPDLVRL…AVIVAALTGD (141 aa). Residue His67 is the Tele-phosphohistidine intermediate; for EIIA activity of the active site. Residue His67 is modified to Phosphohistidine; by HPr. In terms of domain architecture, HPr spans 161-253; the sequence is AERFEWTIAY…LTAQEKADAE (93 aa). His175 (pros-phosphohistidine intermediate; for HPr activity) is an active-site residue. His175 is modified (phosphohistidine; by EI). The PTS EI stretch occupies residues 274–838; the sequence is AIVGIGASPG…ALEAQREGQA (565 aa). His460 acts as the Tele-phosphohistidine intermediate; for PTS EI activity in catalysis. Phosphohistidine; by autocatalysis is present on His460. Arg567 and Arg603 together coordinate phosphoenolpyruvate. Glu697 and Asp721 together coordinate Mg(2+). Residues 720-721 and Arg731 each bind phosphoenolpyruvate; that span reads ND. Cys768 acts as the Proton donor in catalysis.

The protein belongs to the PEP-utilizing enzyme family. Mg(2+) is required as a cofactor.

It is found in the cytoplasm. The enzyme catalyses L-histidyl-[protein] + phosphoenolpyruvate = N(pros)-phospho-L-histidyl-[protein] + pyruvate. In terms of biological role, the phosphoenolpyruvate-dependent sugar phosphotransferase system (sugar PTS), a major carbohydrate active transport system, catalyzes the phosphorylation of incoming sugar substrates concomitantly with their translocation across the cell membrane. The enzyme II FruAB PTS system is involved in fructose transport. This chain is Multiphosphoryl transfer protein, found in Xanthomonas campestris pv. campestris (strain ATCC 33913 / DSM 3586 / NCPPB 528 / LMG 568 / P 25).